Reading from the N-terminus, the 151-residue chain is Large ribosomal subunit protein uL13 (151 aa).

Belongs to the universal ribosomal protein uL13 family. As to quaternary structure, part of the 50S ribosomal subunit.

This protein is one of the early assembly proteins of the 50S ribosomal subunit, although it is not seen to bind rRNA by itself. It is important during the early stages of 50S assembly. The sequence is that of Large ribosomal subunit protein uL13 from Synechococcus sp. (strain JA-3-3Ab) (Cyanobacteria bacterium Yellowstone A-Prime).